We begin with the raw amino-acid sequence, 436 residues long: MYQSRRRRRRRWGRRILSRYKRKWGRRSRRGHGIYRRWRRWRRRPRTVVTEQHSRRVKTIIVRGWEPLGNICPTDSARAKATPYASYDSDSGQGQWHGTWGHHWFTFQSLVDRAEARLNSFSGNWESYDYLRFLGGTMYFMQPREMCFMFGNDPYLMTSDLDKTASQKNRAEETWITPGYLMHRPGTHLILSRQKVERRSMYKIRVPVPTSWRGWFPIPDCFSYVLCHWYWTWWDPDACFFDPCATGSSCEAEPWWSTAQTKQAWVDRTKLDDPPVGGTGPNQKTWAPFLPSRPCTNYYTHSASFWFKYKLKFQVTGENIWAPVPRDYSQRGTVPTAPSRQQVESEARAPYPKTNRPPTTADILPGDLDSDGILEDEAYERITRDNPCPKRPRPLGIRWWDGTPGRTLQEQQQAAVLRPKPRRQLLRRLRDVLLQL.

The disordered stretch occupies residues 326–370 (RDYSQRGTVPTAPSRQQVESEARAPYPKTNRPPTTADILPGDLDS). Over residues 330–344 (QRGTVPTAPSRQQVE) the composition is skewed to polar residues.

Belongs to the anelloviridae capsid protein family.

The protein localises to the virion. Self-assembles to form an icosahedral capsid with a T=1 symmetry, about 30 nm in diameter, and consisting of 60 capsid proteins. The capsid encapsulates the genomic DNA. Capsid protein is involved in attachment and entry into the host cell. The sequence is that of Capsid protein from Torque teno felis virus (isolate Fc-TTV4).